We begin with the raw amino-acid sequence, 325 residues long: Replication factor C small subunit (325 aa).

47–54 provides a ligand contact to ATP; it reads GPPGTGKT.

The protein belongs to the activator 1 small subunits family. RfcS subfamily. In terms of assembly, heteromultimer composed of small subunits (RfcS) and large subunits (RfcL).

Its function is as follows. Part of the RFC clamp loader complex which loads the PCNA sliding clamp onto DNA. The polypeptide is Replication factor C small subunit (Aeropyrum pernix (strain ATCC 700893 / DSM 11879 / JCM 9820 / NBRC 100138 / K1)).